We begin with the raw amino-acid sequence, 1030 residues long: MMS19 nucleotide excision repair protein homolog (1030 aa).

Ala-2 carries the N-acetylalanine modification. An N6-acetyllysine modification is found at Lys-496. 4 HEAT repeats span residues 866–904 (QRFF…RLPK), 908–946 (LPEL…EAPQ), 949–987 (SLHV…LPTP), and 990–1028 (LPYK…LGSP). Ser-1027 carries the post-translational modification Phosphoserine.

This sequence belongs to the MET18/MMS19 family. Component of the CIA complex. In the CIA complex, interacts directly with CIAO2B and CIAO3. Component of the MMXD complex, composed of CIAO1, ERCC2, CIAO2B, MMS19 and SLC25A5. Interacts with CIAO2B; the interaction is direct. Interacts with ERCC2/XPD; the interaction is direct. Interacts with ERCC3/XPB and NCOA3/RAC3. Interacts with RTEL1; the interaction mediates the association of RTEL1 with the CIA complex. Interacts with BRIP1. Interacts with KIF4A; the interaction facilitates the transfer of Fe-S clusters to KIF4A to ensure proper localization of KIF4A to the mitotic machinery components. Interacts with CCDC117; the interaction is indirect. Ubiquitinated; undergoes 'Lys-48'-linked polyubiquitination by MAGEF1-NSMCE1 ubiquitin ligase complex leading to proteasomal degradation. Ubiquitously expressed with higher expression in testis.

It is found in the nucleus. The protein resides in the cytoplasm. The protein localises to the cytoskeleton. It localises to the spindle. Its subcellular location is the microtubule organizing center. It is found in the centrosome. Functionally, key component of the cytosolic iron-sulfur protein assembly (CIA) complex, a multiprotein complex that mediates the incorporation of iron-sulfur cluster into apoproteins specifically involved in DNA metabolism and genomic integrity. In the CIA complex, MMS19 acts as an adapter between early-acting CIA components and a subset of cellular target iron-sulfur proteins such as ERCC2/XPD, FANCJ and RTEL1, thereby playing a key role in nucleotide excision repair (NER), homologous recombination-mediated double-strand break DNA repair, DNA replication and RNA polymerase II (POL II) transcription. As part of the mitotic spindle-associated MMXD complex, plays a role in chromosome segregation, probably by facilitating iron-sulfur (Fe-S) cluster assembly into ERCC2/XPD. Together with CIAO2, facilitates the transfer of Fe-S clusters to the motor protein KIF4A, which ensures proper localization of KIF4A to mitotic machinery components to promote the progression of mitosis. Indirectly acts as a transcriptional coactivator of estrogen receptor (ER), via its role in iron-sulfur insertion into some component of the TFIIH-machinery. This chain is MMS19 nucleotide excision repair protein homolog, found in Homo sapiens (Human).